A 764-amino-acid chain; its full sequence is MKTAGEPDRRRQRRQVRTGRFSCAWWSTSVMLFFSLPEGNCMKESLPRVKLGYKDLIHSRSVVPFTGSSEGQHFQTVLLDEERSRLLLGAKDHVYLLDPDNINKHPKKLSWPASRDRVEMCILAGKNPLTECANFIRVLHSYNRTHVYACGTGAFHPTCAFLEIKGHKEDRWLLLHSNTMESGRMKCPFDPNQPFASVLTDQYLYAGTASDFLGKDSTFTRSLGPPPHQQYIRTDISEDYWINEGKFISAHPISDTYNPDDDKIYFFFREASRDGSTTDKSVLSRVARICRNDVGGLRSLTNKWTTFLKARLVCSIPGPDGVDTHFDELQDIFLLPSRDEKNPMVYGVFTTTSSIFKGSAVCVYTMEDIRAAFNGPYAHKEGPDHRWVEYEGRIPYPRPGTCPSRTYDPHIKTTKDFPDEVISFIRLHPLMYQSVHPMTGRPIFTRINTEYRLTQIIVDRVAAEDGQYAVMFLGTDMGSVLKVVSITQENWSSEEIILEELQVFKNPSPILNMEVSSKQQQLFVGGSDGLVQVSLHRCQIYGQGCAECCLARDPYCAWDGTQCSRYIPASKRRARRQDIKHGDPSSHCWDTEDVLGRNVEEKVLYGVESNSSFLECVSKSQQALIRWFVLKPGVDHRQEIKPDERVLITDRGLLIRWLQRGDAGSYFCTSQEHRFTRTLLHVSLHILDRGQINAHQPAIRESSENPAVTEPRQRYKDYLRMLSGPARSLDEYCETMWHREKKQKQKGKWKHVQELRKSRNRRHH.

The N-terminal stretch at 1–41 (MKTAGEPDRRRQRRQVRTGRFSCAWWSTSVMLFFSLPEGNC) is a signal peptide. The 488-residue stretch at 48-535 (RVKLGYKDLI…GSDGLVQVSL (488 aa)) folds into the Sema domain. A disulfide bridge links C121 with C132. N143 carries N-linked (GlcNAc...) asparagine glycosylation. Intrachain disulfides connect C150/C159, C290/C402, and C314/C362. N490 carries N-linked (GlcNAc...) asparagine glycosylation. A disulfide bridge links C538 with C556. The N-linked (GlcNAc...) asparagine glycan is linked to N610. Positions 661–740 (GDAGSYFCTS…EYCETMWHRE (80 aa)) constitute an Ig-like C2-type domain. C668 and C733 form a disulfide bridge. The disordered stretch occupies residues 743–764 (QKQKGKWKHVQELRKSRNRRHH).

Belongs to the semaphorin family.

The protein localises to the secreted. Functionally, may play a role in the guidance of several axon pathways. In Danio rerio (Zebrafish), this protein is Semaphorin-3D (sema3d).